A 117-amino-acid chain; its full sequence is Large ribosomal subunit protein bL17 (117 aa).

Belongs to the bacterial ribosomal protein bL17 family. In terms of assembly, part of the 50S ribosomal subunit. Contacts protein L32.

This Thermomicrobium roseum (strain ATCC 27502 / DSM 5159 / P-2) protein is Large ribosomal subunit protein bL17.